The sequence spans 415 residues: Coenzyme F420 hydrogenase subunit alpha (415 aa).

Cysteine 68, cysteine 71, cysteine 391, and cysteine 394 together coordinate Ni(2+).

It belongs to the [NiFe]/[NiFeSe] hydrogenase large subunit family. Heterocomplex of the form (alpha(1)beta(1)gamma(1))(8). Ni(2+) is required as a cofactor. Iron-sulfur cluster serves as cofactor. The cofactor is FAD.

The enzyme catalyses oxidized coenzyme F420-(gamma-L-Glu)(n) + H2 + H(+) = reduced coenzyme F420-(gamma-L-Glu)(n). Reduces the physiological low-potential two-electron acceptor coenzyme F420, and the artificial one-electron acceptor methylviologen. The protein is Coenzyme F420 hydrogenase subunit alpha (frhA) of Methanocaldococcus jannaschii (strain ATCC 43067 / DSM 2661 / JAL-1 / JCM 10045 / NBRC 100440) (Methanococcus jannaschii).